The sequence spans 201 residues: Pyridoxal 5'-phosphate synthase subunit PdxT (201 aa).

L-glutamine is bound at residue 50 to 52; that stretch reads GES. The Nucleophile role is filled by cysteine 82. L-glutamine-binding positions include arginine 111 and 139–140; that span reads IR. Active-site charge relay system residues include histidine 180 and glutamate 182.

This sequence belongs to the glutaminase PdxT/SNO family. As to quaternary structure, in the presence of PdxS, forms a dodecamer of heterodimers. Only shows activity in the heterodimer.

The catalysed reaction is aldehydo-D-ribose 5-phosphate + D-glyceraldehyde 3-phosphate + L-glutamine = pyridoxal 5'-phosphate + L-glutamate + phosphate + 3 H2O + H(+). It catalyses the reaction L-glutamine + H2O = L-glutamate + NH4(+). It participates in cofactor biosynthesis; pyridoxal 5'-phosphate biosynthesis. In terms of biological role, catalyzes the hydrolysis of glutamine to glutamate and ammonia as part of the biosynthesis of pyridoxal 5'-phosphate. The resulting ammonia molecule is channeled to the active site of PdxS. In Nocardioides sp. (strain ATCC BAA-499 / JS614), this protein is Pyridoxal 5'-phosphate synthase subunit PdxT.